The primary structure comprises 1700 residues: Rho guanine nucleotide exchange factor 28 (1700 aa).

The tract at residues 288–343 (TEKATMPSGAAETEEEVRNLESGRSPSEEEEDAKSIKSQVDGPSEHEDQDRLPLDR) is disordered. Phosphoserine occurs at positions 312 and 314. Positions 330–343 (PSEHEDQDRLPLDR) are enriched in basic and acidic residues. Residue Ser-478 is modified to Phosphoserine. The disordered stretch occupies residues 483 to 532 (VADSEGEGGSEPPICYAVGSQSSPRTGLPSGDELDSFETNTEPDCNISRT). Residue Ser-623 is modified to Phosphoserine. The Phorbol-ester/DAG-type zinc-finger motif lies at 651 to 698 (RHQFVPGTFSGVLQCSGCDKTLLGKESLQCANCKANTHKGCKDAVPPC). The region spanning 846–1041 (KRQDVIFELM…KDMIAAVDLK (196 aa)) is the DH domain. The region spanning 1095–1184 (ATGRFKDILA…NWMRRIQQAV (90 aa)) is the PH domain. Disordered regions lie at residues 1184-1205 (VESCPEEEGGRTSESDEERRKA) and 1289-1328 (KMGDVSQSSEESPGGTVLMDTPSTQDVPASPTASLVTEGT). Basic and acidic residues predominate over residues 1191–1205 (EGGRTSESDEERRKA). The tract at residues 1292-1301 (DVSQSSEESP) is interaction with PTK2/FAK1; required for regulation of axonal branching and synapse formation. Residues 1309–1325 (TPSTQDVPASPTASLVT) show a composition bias toward polar residues. A mediates cytoplasmic retention and interaction with YWHAH region spans residues 1369 to 1380 (IIQAIQNLTRLL). Residues 1421–1522 (QEKSRYLEKQ…RERQKMRVQQ (102 aa)) are a coiled coil. Residues 1421–1700 (QEKSRYLEKQ…DGAEENILYL (280 aa)) form an interaction with microtubules region. The tract at residues 1493-1524 (QLQEYQQSLERLREGQRMVERERQKMRVQQGL) is RNA-binding. Ser-1535 is subject to Phosphoserine. Residues 1563-1576 (FINEAFGHMSLNTS) are mediates cytoplasmic retention and interaction with MAPK8IP1. The disordered stretch occupies residues 1602–1700 (SESPTELKID…DGAEENILYL (99 aa)). Ser-1604 carries the phosphoserine modification. Over residues 1647-1663 (DLDSFQSESSSPQDSNQ) the composition is skewed to low complexity. Polar residues predominate over residues 1664-1675 (RGPQPQTLTTEA).

Homooligomer; forms some cytoplasmic aggregates. Forms a complex with MAPK8 and MAPK8IP1. Interacts with RHOA. Interacts with microtubules. Interacts with YWHAE and YWHAH. Interacts with PTK2/FAK1. Interacts with NEFL. Interacts with CTNND2; prevents interaction with RHOA. Post-translationally, phosphorylated on tyrosine upon stimulation of cells by laminin. Highly enriched in the brain (at protein level). Also detected in lung and kidney.

It localises to the cytoplasm. The protein resides in the cell membrane. In terms of biological role, functions as a RHOA-specific guanine nucleotide exchange factor regulating signaling pathways downstream of integrins and growth factor receptors. Functions in axonal branching, synapse formation and dendritic morphogenesis. Also functions in focal adhesion formation, cell motility and B-lymphocytes activation. May regulate NEFL expression and aggregation and play a role in apoptosis. This Mus musculus (Mouse) protein is Rho guanine nucleotide exchange factor 28 (Arhgef28).